Reading from the N-terminus, the 257-residue chain is 3-deoxy-manno-octulosonate cytidylyltransferase (257 aa).

This sequence belongs to the KdsB family.

It localises to the cytoplasm. It catalyses the reaction 3-deoxy-alpha-D-manno-oct-2-ulosonate + CTP = CMP-3-deoxy-beta-D-manno-octulosonate + diphosphate. It participates in nucleotide-sugar biosynthesis; CMP-3-deoxy-D-manno-octulosonate biosynthesis; CMP-3-deoxy-D-manno-octulosonate from 3-deoxy-D-manno-octulosonate and CTP: step 1/1. Its pathway is bacterial outer membrane biogenesis; lipopolysaccharide biosynthesis. Functionally, activates KDO (a required 8-carbon sugar) for incorporation into bacterial lipopolysaccharide in Gram-negative bacteria. This Stenotrophomonas maltophilia (strain R551-3) protein is 3-deoxy-manno-octulosonate cytidylyltransferase.